We begin with the raw amino-acid sequence, 127 residues long: Alpha-hordothionin (127 aa).

Residues 1–18 (MVCLLILGLVLEQVQVEG) form the signal peptide. 4 cysteine pairs are disulfide-bonded: Cys21/Cys57, Cys22/Cys49, Cys30/Cys47, and Cys34/Cys43. Positions 64–127 (LALVSNSDEP…GDAGLTSLTA (64 aa)) are cleaved as a propeptide — acidic domain.

It belongs to the plant thionin (TC 1.C.44) family. 4 C-C subfamily.

The protein resides in the secreted. In terms of biological role, thionins are small plant proteins which are toxic to animal cells. They seem to exert their toxic effect at the level of the cell membrane. Their precise function is not known. The protein is Alpha-hordothionin (THI1.1) of Hordeum vulgare (Barley).